We begin with the raw amino-acid sequence, 404 residues long: Probable tRNA sulfurtransferase (404 aa).

A THUMP domain is found at 60 to 165 (QPIVEALKLV…DEAAYISYEE (106 aa)). ATP-binding positions include 183 to 184 (ML), 208 to 209 (HF), Arg265, Gly287, and Gln296.

The protein belongs to the ThiI family.

The protein localises to the cytoplasm. It catalyses the reaction [ThiI sulfur-carrier protein]-S-sulfanyl-L-cysteine + a uridine in tRNA + 2 reduced [2Fe-2S]-[ferredoxin] + ATP + H(+) = [ThiI sulfur-carrier protein]-L-cysteine + a 4-thiouridine in tRNA + 2 oxidized [2Fe-2S]-[ferredoxin] + AMP + diphosphate. The enzyme catalyses [ThiS sulfur-carrier protein]-C-terminal Gly-Gly-AMP + S-sulfanyl-L-cysteinyl-[cysteine desulfurase] + AH2 = [ThiS sulfur-carrier protein]-C-terminal-Gly-aminoethanethioate + L-cysteinyl-[cysteine desulfurase] + A + AMP + 2 H(+). Its pathway is cofactor biosynthesis; thiamine diphosphate biosynthesis. Catalyzes the ATP-dependent transfer of a sulfur to tRNA to produce 4-thiouridine in position 8 of tRNAs, which functions as a near-UV photosensor. Also catalyzes the transfer of sulfur to the sulfur carrier protein ThiS, forming ThiS-thiocarboxylate. This is a step in the synthesis of thiazole, in the thiamine biosynthesis pathway. The sulfur is donated as persulfide by IscS. The polypeptide is Probable tRNA sulfurtransferase (Streptococcus pyogenes serotype M12 (strain MGAS2096)).